A 683-amino-acid chain; its full sequence is U4/U6 small nuclear ribonucleoprotein Prp3 (683 aa).

In terms of domain architecture, PWI spans 1-87 (MALSKRELDE…HSKSSSDRSR (87 aa)). The span at 73-107 (GRSSRHSKSSSDRSRKRELKEVFGDDSEISKESSG) shows a compositional bias: basic and acidic residues. Residues 73-135 (GRSSRHSKSS…IPGPPSESPG (63 aa)) form a disordered region. Lys-139 is covalently cross-linked (Glycyl lysine isopeptide (Lys-Gly) (interchain with G-Cter in SUMO2)). A disordered region spans residues 153-183 (IEERKKQLSFISPPTPQPKTPSSSQPERLPI). The residue at position 164 (Ser-164) is a Phosphoserine. Phosphothreonine is present on Thr-167. Glycyl lysine isopeptide (Lys-Gly) (interchain with G-Cter in SUMO2) cross-links involve residues Lys-244 and Lys-252. The mediates interaction with SART3 stretch occupies residues 416–550 (NLVEHPAQLN…VHISVYRVRN (135 aa)). A Phosphoserine modification is found at Ser-619.

In terms of assembly, component of the precatalytic spliceosome (spliceosome B complex). Component of the U4/U6-U5 tri-snRNP complex, a building block of the precatalytic spliceosome (spliceosome B complex). The U4/U6-U5 tri-snRNP complex is composed of the U4, U6 and U5 snRNAs and at least PRPF3, PRPF4, PRPF6, PRPF8, PRPF31, SNRNP200, TXNL4A, SNRNP40, SNRPB, SNRPD1, SNRPD2, SNRPD3, SNRPE, SNRPF, SNRPG, DDX23, CD2BP2, PPIH, SNU13, EFTUD2, SART1 and USP39, plus LSM2, LSM3, LSM4, LSM5, LSM6, LSM7 and LSM8. Interacts directly with PRPF4. Part of a heteromeric complex containing PPIH, PRPF3 and PRPF4 that is stable in the absence of RNA. Interacts with SART3; the interaction is direct and recruits the deubiquitinase USP4 to PRPF3. Interacts with PRPF19. Interacts ('Lys-63'-linked polyubiquitinated) with PRPF8 (via the MPN (JAB/Mov34) domain); may stabilize the U4/U6-U5 tri-snRNP complex. Interacts with ERCC6. Ubiquitinated. Undergoes 'Lys-63'-linked polyubiquitination by PRPF19 and deubiquitination by USP4. 'Lys-63'-linked ubiquitination increases the affinity for PRPF8 and may regulate the assembly of the U4/U6-U5 tri-snRNP complex.

The protein resides in the nucleus. Its subcellular location is the nucleus speckle. Functionally, plays a role in pre-mRNA splicing as component of the U4/U6-U5 tri-snRNP complex that is involved in spliceosome assembly, and as component of the precatalytic spliceosome (spliceosome B complex). The sequence is that of U4/U6 small nuclear ribonucleoprotein Prp3 (PRPF3) from Pongo abelii (Sumatran orangutan).